A 287-amino-acid polypeptide reads, in one-letter code: ATP synthase gamma chain (287 aa).

Belongs to the ATPase gamma chain family. F-type ATPases have 2 components, CF(1) - the catalytic core - and CF(0) - the membrane proton channel. CF(1) has five subunits: alpha(3), beta(3), gamma(1), delta(1), epsilon(1). CF(0) has three main subunits: a, b and c.

It localises to the cell inner membrane. Functionally, produces ATP from ADP in the presence of a proton gradient across the membrane. The gamma chain is believed to be important in regulating ATPase activity and the flow of protons through the CF(0) complex. In Xylella fastidiosa (strain M12), this protein is ATP synthase gamma chain.